The sequence spans 208 residues: Thiamine-phosphate synthase (208 aa).

4-amino-2-methyl-5-(diphosphooxymethyl)pyrimidine is bound by residues 36–40 (QLRMK) and D68. Mg(2+) contacts are provided by D69 and D88. T107 contacts 4-amino-2-methyl-5-(diphosphooxymethyl)pyrimidine. 133 to 135 (TTT) is a binding site for 2-[(2R,5Z)-2-carboxy-4-methylthiazol-5(2H)-ylidene]ethyl phosphate. K136 serves as a coordination point for 4-amino-2-methyl-5-(diphosphooxymethyl)pyrimidine. A 2-[(2R,5Z)-2-carboxy-4-methylthiazol-5(2H)-ylidene]ethyl phosphate-binding site is contributed by G169.

It belongs to the thiamine-phosphate synthase family. Requires Mg(2+) as cofactor.

The enzyme catalyses 2-[(2R,5Z)-2-carboxy-4-methylthiazol-5(2H)-ylidene]ethyl phosphate + 4-amino-2-methyl-5-(diphosphooxymethyl)pyrimidine + 2 H(+) = thiamine phosphate + CO2 + diphosphate. The catalysed reaction is 2-(2-carboxy-4-methylthiazol-5-yl)ethyl phosphate + 4-amino-2-methyl-5-(diphosphooxymethyl)pyrimidine + 2 H(+) = thiamine phosphate + CO2 + diphosphate. It catalyses the reaction 4-methyl-5-(2-phosphooxyethyl)-thiazole + 4-amino-2-methyl-5-(diphosphooxymethyl)pyrimidine + H(+) = thiamine phosphate + diphosphate. It functions in the pathway cofactor biosynthesis; thiamine diphosphate biosynthesis; thiamine phosphate from 4-amino-2-methyl-5-diphosphomethylpyrimidine and 4-methyl-5-(2-phosphoethyl)-thiazole: step 1/1. In terms of biological role, condenses 4-methyl-5-(beta-hydroxyethyl)thiazole monophosphate (THZ-P) and 2-methyl-4-amino-5-hydroxymethyl pyrimidine pyrophosphate (HMP-PP) to form thiamine monophosphate (TMP). The sequence is that of Thiamine-phosphate synthase from Phocaeicola vulgatus (strain ATCC 8482 / DSM 1447 / JCM 5826 / CCUG 4940 / NBRC 14291 / NCTC 11154) (Bacteroides vulgatus).